A 286-amino-acid polypeptide reads, in one-letter code: MVKCLLLSFLIIAIFIGVPTAKGDVNFDLSTATAKTYTKFIEDFRATLPFSHKVYDIPLLYSTISDSRRFILLDLTSYAYETISVAIDVTNVYVVAYRTRDVSYFFKESPPEAYNILFKGTRKITLPYTGNYENLQTAAHKIRENIDLGLPALSSAITTLFYYNAQSAPSALLVLIQTTAEAARFKYIERHVAKYVATNFKPNLAIISLENQWSALSKQIFLAQNQGGKFRNPVDLIKPTGERFQVTNVDSDVVKGNIKLLLNSRASTADENFITTMTLLGESVVN.

An N-terminal signal peptide occupies residues 1–23 (MVKCLLLSFLIIAIFIGVPTAKG). Glu181 is an active-site residue.

This sequence belongs to the ribosome-inactivating protein family. Type 1 RIP subfamily.

The catalysed reaction is Endohydrolysis of the N-glycosidic bond at one specific adenosine on the 28S rRNA.. The protein is Ribosome-inactivating protein momordin II of Momordica balsamina (Bitter gourd).